The sequence spans 323 residues: CIMIP2 protein CG18335 (323 aa).

It belongs to the CIMIP2 family.

It localises to the cytoplasm. Its subcellular location is the cytoskeleton. The protein localises to the cilium axoneme. Probable microtubule inner protein (MIP) part of the dynein-decorated doublet microtubules (DMTs) in cilium axoneme. The protein is CIMIP2 protein CG18335 of Drosophila melanogaster (Fruit fly).